A 557-amino-acid chain; its full sequence is MTDGPLIVQSDKTLLLEVDHPRAGACRAAIAPFAELERAPEHVHTYRLTPLGLWNARAAGHDAEQVVDTLLEFSRYSVPHALLVDVAETMARYGRLQLVKDEEHGLVLRSLDPAVLEEVLRSRKSAPLLGTRIAPDAVLVHPSERGNLKQVLLKLGWPAEDLAGYVDGEAHAIDLAEDGWALRPYQSEAVDNFWNGGSGVVVLPCGAGKTLVGAAAMAKARATTLILVTNTVSARQWRDELLKRTSLTEDEIGEYSGARKEIRPVTIATYQVVTTKRKGVYPHLELFDARDWGLILYDEVHLLPAPIFRMTADLQARRRLGLTATLVREDGREGDVFSLIGPKRYDAPWKDIEAQGYIAPADCVEVRVTLPDAERLAYATAEDDEKYRLCSTSLSKSRVVEKLVAQHAGEPTLVIGQYIDQLDDLAARLDAPVIKGETTVKERQRLFDAFRHGEITTLVVSKVANFSIDLPEAKVAIQVSGSFGSRQEEAQRLGRVLRPKGDHGSARFYTVVSRDTKDQDYAAHRQRFLAEQGYAYRIVDADDIDGGVPDADGVLPG.

The required for protein stability or solubility stretch occupies residues 1-135; sequence MTDGPLIVQS…APLLGTRIAP (135 aa). The region spanning 190-344 is the Helicase ATP-binding domain; the sequence is VDNFWNGGSG…DVFSLIGPKR (155 aa). Residue 203–210 coordinates ATP; the sequence is LPCGAGKT. Positions 298–301 match the DEAH box motif; it reads DEVH. One can recognise a Helicase C-terminal domain in the interval 398–544; sequence RVVEKLVAQH…AYRIVDADDI (147 aa).

It belongs to the helicase family. RAD25/XPB subfamily. Monomer. Requires Mn(2+) as cofactor. Mg(2+) serves as cofactor. The cofactor is Ca(2+).

It carries out the reaction Couples ATP hydrolysis with the unwinding of duplex DNA by translocating in the 3'-5' direction.. It catalyses the reaction ATP + H2O = ADP + phosphate + H(+). ATP-dependent 3'-5' DNA helicase, unwinds 3'-overhangs, 3'- flaps, and splayed-arm DNA substrates but not 5'-overhangs or 5'-flap substrates. Requires ATP hydrolysis for activity; the ATPase activity is DNA-dependent and requires a minimum of 4 single-stranded nucleotides (nt) with 6-10 nt providing all necessary interactions for full processive unwinding. The ATPase prefers ATP over CTP or GTP, is almost inactive with TTP. In Kineococcus radiotolerans (strain ATCC BAA-149 / DSM 14245 / SRS30216), this protein is DNA 3'-5' helicase XPB.